The sequence spans 184 residues: Dirigent protein 13 (184 aa).

An N-terminal signal peptide occupies residues 1-25 (MANQIYIISLIFLSVLLYQSTTVLS). Cys-36 and Cys-182 are disulfide-bonded. Asn-55 and Asn-119 each carry an N-linked (GlcNAc...) asparagine glycan.

It belongs to the plant dirigent protein family. As to quaternary structure, homodimer. Expressed in root vasculature and meristems, cotyledons, flowers, siliques, and leaf trichomes. Localized in the interfascicular/vascular cambia and developing xylem.

The protein localises to the secreted. It is found in the extracellular space. Its subcellular location is the apoplast. Dirigent proteins impart stereoselectivity on the phenoxy radical-coupling reaction, yielding optically active lignans from two molecules of coniferyl alcohol in the biosynthesis of lignans, flavonolignans, and alkaloids and thus plays a central role in plant secondary metabolism. The sequence is that of Dirigent protein 13 (DIR13) from Arabidopsis thaliana (Mouse-ear cress).